A 185-amino-acid chain; its full sequence is NADH-quinone oxidoreductase subunit B (185 aa).

Residues Cys37, Cys38, Cys103, and Cys132 each contribute to the [4Fe-4S] cluster site.

Belongs to the complex I 20 kDa subunit family. As to quaternary structure, NDH-1 is composed of 14 different subunits. Subunits NuoB, C, D, E, F, and G constitute the peripheral sector of the complex. Requires [4Fe-4S] cluster as cofactor.

The protein localises to the cell membrane. The enzyme catalyses a quinone + NADH + 5 H(+)(in) = a quinol + NAD(+) + 4 H(+)(out). NDH-1 shuttles electrons from NADH, via FMN and iron-sulfur (Fe-S) centers, to quinones in the respiratory chain. The immediate electron acceptor for the enzyme in this species is believed to be a menaquinone. Couples the redox reaction to proton translocation (for every two electrons transferred, four hydrogen ions are translocated across the cytoplasmic membrane), and thus conserves the redox energy in a proton gradient. This Thermobifida fusca (strain YX) protein is NADH-quinone oxidoreductase subunit B.